The primary structure comprises 396 residues: Serine/threonine-protein kinase VRK1 (396 aa).

The region spanning 37–317 (WKVGLPIGQG…LLDYTEKPLY (281 aa)) is the Protein kinase domain. Residues 43-51 (IGQGGFGCI) and lysine 71 each bind ATP. Residue lysine 71 forms a Glycyl lysine isopeptide (Lys-Gly) (interchain with G-Cter in SUMO2) linkage. Residue aspartate 177 is the Proton acceptor of the active site. Serine 342 carries the post-translational modification Phosphoserine; by PLK3. The interval 354–396 (ITKKRKKEIEESKEPGVEDTEWSNTQTEEAIQTRSRTRKRVQK) is disordered. Threonine 355 carries the phosphothreonine; by autocatalysis modification. The span at 360–369 (KEIEESKEPG) shows a compositional bias: basic and acidic residues. The span at 375 to 387 (WSNTQTEEAIQTR) shows a compositional bias: polar residues. Position 376 is a phosphoserine (serine 376). Threonine 378 bears the Phosphothreonine mark. A required for interaction with the nucleosome region spans residues 387–393 (RSRTRKR).

Belongs to the protein kinase superfamily. CK1 Ser/Thr protein kinase family. VRK subfamily. In terms of assembly, interacts with HDAC1, KAT2B, SETDB1, KDM3A and KDM4A. Associates with the nucleosome through interactions with nucleosome DNA, histone H2A and histone H2B; the interaction with H2A and H2B is mediated by the nucleosome acidic patch, a cluster of negatively charged residues of H2A and H2B forming a cleft within the nucleosome core. (Microbial infection) Interacts with vaccinia protein B12; this interaction inhibits the repressive activity of the vaccinia virus B12 pseudokinase on viral replication factory formation. Autophosphorylated at various serine and threonine residues. Autophosphorylation does not impair its ability to phosphorylate p53/TP53. Phosphorylation by PLK3 leads to induction of Golgi fragmentation during mitosis. In terms of tissue distribution, widely expressed. Highly expressed in fetal liver, testis and thymus.

It is found in the nucleus. The protein resides in the cytoplasm. It localises to the cajal body. It carries out the reaction L-seryl-[protein] + ATP = O-phospho-L-seryl-[protein] + ADP + H(+). It catalyses the reaction L-threonyl-[protein] + ATP = O-phospho-L-threonyl-[protein] + ADP + H(+). With respect to regulation, active in presence of Mn(2+), Mg(2+) and Zn(2+), but is not functional with Ca(2+) or Cu(2+). Has a higher affinity for Mn(2+) than for Mg(2+). RAN inhibits its autophosphorylation and its ability to phosphorylate histone H3. In terms of biological role, serine/threonine kinase involved in the regulation of key cellular processes including the cell cycle, nuclear condensation, transcription regulation, and DNA damage response. Controls chromatin organization and remodeling by mediating phosphorylation of histone H3 on 'Thr-4' and histone H2AX (H2aXT4ph). It also phosphorylates KAT5 in response to DNA damage, promoting KAT5 association with chromatin and histone acetyltransferase activity. Is involved in the regulation of cell cycle progression of neural progenitors, and is required for proper cortical neuronal migration. Is involved in neurite elongation and branching in motor neurons, and has an essential role in Cajal bodies assembly, acting through COIL phosphorylation and the control of coilin degradation. Involved in Golgi disassembly during the cell cycle: following phosphorylation by PLK3 during mitosis, it is required to induce Golgi fragmentation. Phosphorylates BANF1: disrupts its ability to bind DNA, reduces its binding to LEM domain-containing proteins and causes its relocalization from the nucleus to the cytoplasm. Phosphorylates TP53BP1 and p53/TP53 on 'Thr-18', preventing the interaction between p53/TP53 and MDM2. Phosphorylates ATF2 which activates its transcriptional activity. Phosphorylates JUN. This Homo sapiens (Human) protein is Serine/threonine-protein kinase VRK1.